The chain runs to 90 residues: UPF0367 protein Ava_2513 (90 aa).

The protein belongs to the UPF0367 family.

In Trichormus variabilis (strain ATCC 29413 / PCC 7937) (Anabaena variabilis), this protein is UPF0367 protein Ava_2513.